Reading from the N-terminus, the 413-residue chain is 3-oxo-tetronate kinase (413 aa).

Residues S254, G354–T357, and G397 each bind ATP.

This sequence belongs to the four-carbon acid sugar kinase family.

The enzyme catalyses 3-dehydro-L-erythronate + ATP = 3-dehydro-4-O-phospho-L-erythronate + ADP + H(+). It carries out the reaction 3-dehydro-D-erythronate + ATP = 3-dehydro-4-O-phospho-D-erythronate + ADP + H(+). Functionally, catalyzes the ATP-dependent phosphorylation of 3-oxo-tetronate to 3-oxo-tetronate 4-phosphate. This is 3-oxo-tetronate kinase from Haemophilus influenzae (strain ATCC 51907 / DSM 11121 / KW20 / Rd).